The following is a 214-amino-acid chain: Charged multivesicular body protein 2b (214 aa).

A coiled-coil region spans residues 16 to 55; the sequence is EQNKELRGTQRAITRDRAALEKQEKQLEMEIKKMAKAGNK. The tract at residues 178 to 203 is disordered; it reads MAKAPSAAKGLPSTSASKSSGISDEE. Polar residues predominate over residues 189-199; it reads PSTSASKSSGI. The MIT-interacting motif signature appears at 202 to 212; sequence EEIERQLKALG.

It belongs to the SNF7 family. In terms of assembly, probable core component of the endosomal sorting required for transport complex III (ESCRT-III). ESCRT-III components are thought to multimerize to form a flat lattice on the perimeter membrane of the endosome.

Its subcellular location is the cytoplasm. The protein resides in the cytosol. It is found in the late endosome membrane. In terms of biological role, probable core component of the endosomal sorting required for transport complex III (ESCRT-III) which is involved in multivesicular bodies (MVBs) formation and sorting of endosomal cargo proteins into MVBs. MVBs contain intraluminal vesicles (ILVs) that are generated by invagination and scission from the limiting membrane of the endosome and mostly are delivered to lysosomes enabling degradation of membrane proteins, such as stimulated growth factor receptors, lysosomal enzymes and lipids. This Xenopus tropicalis (Western clawed frog) protein is Charged multivesicular body protein 2b (chmp2b).